Here is a 428-residue protein sequence, read N- to C-terminus: Putative G-protein coupled receptor F59B2.13 (428 aa).

Topologically, residues 1-30 (MSNNTTIPSKTATDICLTDRQMSLSVSSTE) are extracellular. N-linked (GlcNAc...) asparagine glycosylation is found at Asn3 and Asn4. The chain crosses the membrane as a helical span at residues 31 to 51 (GVLIGTIIPILVLFGISGNIL). Over 52–67 (NLTVLLAPNLRTRSNQ) the chain is Cytoplasmic. A helical transmembrane segment spans residues 68–88 (LLACLAVADIVSLVVILPHSM). Topologically, residues 89-110 (AHYETFETALWFRKFYGKYKFQ) are extracellular. A helical transmembrane segment spans residues 111 to 131 (IIAMTNWSIATATWLVFVICL). Over 132–154 (ERLIIIKYPLSVRKQAKFFTPRN) the chain is Cytoplasmic. The helical transmembrane segment at 155 to 175 (VVTIIVVTTFILTSYNHVSHA) threads the bilayer. Topologically, residues 176 to 222 (CAEKLFCNGTQYHVACLGIDSERWFRNEPNPNSEFMKSVVRVAPQVN) are extracellular. Asn183 is a glycosylation site (N-linked (GlcNAc...) asparagine). The chain crosses the membrane as a helical span at residues 223–243 (AIFVVLIPVVLVIIFNVMLIL). The Cytoplasmic portion of the chain corresponds to 244–278 (TLRQRTKLFEPSKTIRGDSQFTQLQSKTEHKVTIT). Residues 279–299 (VTAIVTCFTITQSPSAFVTFL) form a helical membrane-spanning segment. At 300–309 (SSYVHRDWVT) the chain is on the extracellular side. The helical transmembrane segment at 310 to 330 (LSAICTILVVLGKALNFVLFC) threads the bilayer. Residues 331 to 428 (LSSASFRQRL…KEFRRGTSFV (98 aa)) lie on the Cytoplasmic side of the membrane.

This sequence belongs to the G-protein coupled receptor 1 family.

The protein resides in the cell membrane. This Caenorhabditis elegans protein is Putative G-protein coupled receptor F59B2.13.